A 261-amino-acid polypeptide reads, in one-letter code: Early E1A protein (261 aa).

The segment at 43–51 (PTLHDLYDL) is interaction with RB1 in competition with E2F1. The tract at residues 78-149 (EGLDINPPPE…VNEGVKAASD (72 aa)) is interaction with UBE2I. The PXLXP motif, interaction with host ZMYND11 signature appears at 106-110 (PDLGA). The LXCXE motif, interaction with host RB1 and TMEM173/STING signature appears at 115–119 (LRCYE). A zinc finger lies at 163–183 (CKSCEFHRNNTGMKELLCSLC). Residues 197-261 (SDDESPSPDS…DLSTRKLPRQ (65 aa)) are disordered. Over residues 203–212 (SPDSTTSPPE) the composition is skewed to low complexity. The PXDLS motif, CTBP-binding motif lies at 250–254 (PLDLS). Residues 256 to 261 (RKLPRQ) carry the Nuclear localization signal motif.

The protein belongs to the adenoviridae E1A protein family. As to quaternary structure, interacts with host UBE2I; this interaction interferes with polySUMOylation. Interacts with host RB1; this interaction induces the aberrant dissociation of RB1-E2F1 complex thereby disrupting the activity of RB1 and activating E2F1-regulated genes. Interacts with host ATF7; the interaction enhances ATF7-mediated viral transactivation activity which requires the zinc binding domains of both proteins. Isoform early E1A 32 kDa protein and isoform early E1A 26 kDa protein interact (via N-terminus) with CUL1 and E3 ubiquitin ligase RBX1; these interactions inhibit RBX1-CUL1-dependent elongation reaction of ubiquitin chains and attenuate ubiquitination of SCF(FBXW7) target proteins. Interacts (via PXLXP motif) with host ZMYND11/BS69 (via MYND-type zinc finger); this interaction inhibits E1A mediated transactivation. Interacts with host EP300; this interaction stimulates the acetylation of RB1 by recruiting EP300 and RB1 into a multimeric-protein complex. Interacts with host CTBP1 and CTBP2; this interaction seems to potentiate viral replication. Interacts with host DCAF7. Interacts with host DYRK1A. Interacts with host KPNA4; this interaction allows E1A import into the host nucleus. Interacts with host EP400; this interaction stabilizes MYC. Interacts with host TBP protein; this interaction probably disrupts the TBP-TATA complex. Interacts (via LXCXE motif) with host TMEM173/STING; this interaction impairs the ability of TMEM173/STING to sense cytosolic DNA and promote the production of type I interferon (IFN-alpha and IFN-beta). Interacts (via C-terminus) with host ZBED1/hDREF (via C-terminus); the interaction is direct.

Its subcellular location is the host nucleus. In terms of biological role, plays a role in viral genome replication by driving entry of quiescent cells into the cell cycle. Stimulation of progression from G1 to S phase allows the virus to efficiently use the cellular DNA replicating machinery to achieve viral genome replication. E1A protein has both transforming and trans-activating activities. Induces the disassembly of the E2F1 transcription factor from RB1 by direct competition for the same binding site on RB1, with subsequent transcriptional activation of E2F1-regulated S-phase genes and of the E2 region of the adenoviral genome. Release of E2F1 leads to the ARF-mediated inhibition of MDM2 and causes TP53/p53 to accumulate because it is not targeted for degradation by MDM2-mediated ubiquitination anymore. This increase in TP53, in turn, would arrest the cell proliferation and direct its death but this effect is counteracted by the viral protein E1B-55K. Inactivation of the ability of RB1 to arrest the cell cycle is critical for cellular transformation, uncontrolled cellular growth and proliferation induced by viral infection. Interaction with RBX1 and CUL1 inhibits ubiquitination of the proteins targeted by SCF(FBXW7) ubiquitin ligase complex, and may be linked to unregulated host cell proliferation. The tumorigenesis-restraining activity of E1A may be related to the disruption of the host CtBP-CtIP complex through the CtBP binding motif. Interaction with host TMEM173/STING impairs the ability of TMEM173/STING to sense cytosolic DNA and promote the production of type I interferon (IFN-alpha and IFN-beta). Promotes the sumoylation of host ZBED1/hDREF with SUMO1. The sequence is that of Early E1A protein from Human adenovirus B serotype 7 (HAdV-7).